Consider the following 349-residue polypeptide: Alanine racemase (349 aa).

Lys-35 (proton acceptor; specific for D-alanine) is an active-site residue. Lys-35 is modified (N6-(pyridoxal phosphate)lysine). Arg-130 lines the substrate pocket. Tyr-244 acts as the Proton acceptor; specific for L-alanine in catalysis. Met-292 contributes to the substrate binding site.

It belongs to the alanine racemase family. Pyridoxal 5'-phosphate serves as cofactor.

It carries out the reaction L-alanine = D-alanine. It participates in amino-acid biosynthesis; D-alanine biosynthesis; D-alanine from L-alanine: step 1/1. Catalyzes the interconversion of L-alanine and D-alanine. May also act on other amino acids. This Cereibacter sphaeroides (strain KD131 / KCTC 12085) (Rhodobacter sphaeroides) protein is Alanine racemase (alr).